We begin with the raw amino-acid sequence, 156 residues long: Endogenous retrovirus group K member 9 Pro protein (156 aa).

A Peptidase A2 domain is found at 21 to 96; the sequence is FEGLVDTGAD…IPLNLWGRDL (76 aa). Asp26 is an active-site residue. A G-patch domain is found at 111-156; that stretch reads YSPTSQKIMTKRGYIPGKGLGKNEDGIKIPFEAKINQKREGIGYPF.

The protein belongs to the peptidase A2 family. HERV class-II K(HML-2) subfamily. In terms of assembly, active as a homodimer. Post-translationally, autoproteolytically processed at the N-terminus. Expected C-terminal autoprocessing not detected. The sequence shown is that of the processed Pro protein.

It catalyses the reaction Processing at the authentic HIV-1 PR recognition site and release of the mature p17 matrix and the p24 capsid protein, as a result of the cleavage of the -SQNY-|-PIVQ- cleavage site.. In terms of biological role, retroviral proteases have roles in the processing of the primary translation products and the maturation of the viral particle. Endogenous Pro proteins may have kept, lost or modified their original function during evolution. This is Endogenous retrovirus group K member 9 Pro protein (ERVK-9) from Homo sapiens (Human).